The following is a 138-amino-acid chain: DASH complex subunit DAD2 (138 aa).

The segment covering 1–14 (MSGFSSRPLSTHLR) has biased composition (polar residues). Disordered regions lie at residues 1–25 (MSGF…QGQS) and 116–138 (PTEH…SGRG).

This sequence belongs to the DASH complex DAD2 family. As to quaternary structure, component of the DASH complex consisting of ASK1, DAD1, DAD2, DAD3, DAD4, DAM1, DUO1, HSK3, SPC19 and SPC34, with a stoichiometry of one copy of each subunit per complex. Multiple DASH complexes oligomerize to form a ring that encircles spindle microtubules and organizes the rod-like NDC80 complexes of the outer kinetochore. DASH complex oligomerization strengthens microtubule attachments. On cytoplasmic microtubules, DASH complexes appear to form patches instead of rings.

It localises to the chromosome. The protein resides in the centromere. It is found in the kinetochore. The protein localises to the cytoplasm. Its subcellular location is the cytoskeleton. It localises to the spindle. The protein resides in the nucleus. In terms of biological role, component of the DASH complex that connects microtubules with kinetochores and couples microtubule depolymerisation to chromosome movement; it is involved in retrieving kinetochores to the spindle poles before their re-orientation on the spindle in early mitosis and allows microtubule depolymerization to pull chromosomes apart and resist detachment during anaphase. Kinetochores, consisting of a centromere-associated inner segment and a microtubule-contacting outer segment, play a crucial role in chromosome segregation by mediating the physical connection between centromeric DNA and microtubules. Kinetochores also serve as an input point for the spindle assembly checkpoint, which delays anaphase until all chromosomes have bioriented on the mitotic spindle. The chain is DASH complex subunit DAD2 from Chaetomium thermophilum (strain DSM 1495 / CBS 144.50 / IMI 039719) (Thermochaetoides thermophila).